A 290-amino-acid polypeptide reads, in one-letter code: Energy-coupling factor transporter ATP-binding protein EcfA2 (290 aa).

Positions 6–246 constitute an ABC transporter domain; it reads EKVEHVYNAR…ADKLAAIGLS (241 aa). 40 to 47 is a binding site for ATP; the sequence is GHTGSGKS.

The protein belongs to the ABC transporter superfamily. Energy-coupling factor EcfA family. Forms a stable energy-coupling factor (ECF) transporter complex composed of 2 membrane-embedded substrate-binding proteins (S component), 2 ATP-binding proteins (A component) and 2 transmembrane proteins (T component).

Its subcellular location is the cell membrane. Its function is as follows. ATP-binding (A) component of a common energy-coupling factor (ECF) ABC-transporter complex. Unlike classic ABC transporters this ECF transporter provides the energy necessary to transport a number of different substrates. This Geobacillus kaustophilus (strain HTA426) protein is Energy-coupling factor transporter ATP-binding protein EcfA2.